The primary structure comprises 622 residues: Chaperone protein HscA homolog (622 aa).

Belongs to the heat shock protein 70 family.

Functionally, chaperone involved in the maturation of iron-sulfur cluster-containing proteins. Has a low intrinsic ATPase activity which is markedly stimulated by HscB. The chain is Chaperone protein HscA homolog from Burkholderia lata (strain ATCC 17760 / DSM 23089 / LMG 22485 / NCIMB 9086 / R18194 / 383).